Consider the following 253-residue polypeptide: Zinc import ATP-binding protein ZnuC (253 aa).

The ABC transporter domain occupies 6–227 (VTLNKISVTF…FGNRGAEQLA (222 aa)). 38-45 (GPNGAGKS) contacts ATP.

It belongs to the ABC transporter superfamily. Zinc importer (TC 3.A.1.15.5) family. The complex is composed of two ATP-binding proteins (ZnuC), two transmembrane proteins (ZnuB) and a solute-binding protein (ZnuA).

The protein resides in the cell inner membrane. It catalyses the reaction Zn(2+)(out) + ATP(in) + H2O(in) = Zn(2+)(in) + ADP(in) + phosphate(in) + H(+)(in). In terms of biological role, part of the ABC transporter complex ZnuABC involved in zinc import. Responsible for energy coupling to the transport system. This chain is Zinc import ATP-binding protein ZnuC, found in Yersinia pestis bv. Antiqua (strain Antiqua).